Reading from the N-terminus, the 327-residue chain is GTPase Obg (327 aa).

Residues 1 to 159 form the Obg domain; sequence MQFIDQANII…WEVQLELKLL (159 aa). Positions 160–327 constitute an OBG-type G domain; it reads AEVGIIGLPN…SLLFEVWKRI (168 aa). ATP-binding positions include 166–173, 191–195, 213–216, 280–283, and 309–311; these read GLPNAGKS, FTTLI, DIPG, NKME, and SSS. Positions 173 and 193 each coordinate Mg(2+).

The protein belongs to the TRAFAC class OBG-HflX-like GTPase superfamily. OBG GTPase family. As to quaternary structure, monomer. It depends on Mg(2+) as a cofactor.

It is found in the cytoplasm. In terms of biological role, an essential GTPase which binds GTP, GDP and possibly (p)ppGpp with moderate affinity, with high nucleotide exchange rates and a fairly low GTP hydrolysis rate. Plays a role in control of the cell cycle, stress response, ribosome biogenesis and in those bacteria that undergo differentiation, in morphogenesis control. This Prochlorococcus marinus (strain MIT 9312) protein is GTPase Obg.